Reading from the N-terminus, the 227-residue chain is Probable septum site-determining protein MinC (227 aa).

The protein belongs to the MinC family. Interacts with MinD and FtsZ.

Cell division inhibitor that blocks the formation of polar Z ring septums. Rapidly oscillates between the poles of the cell to destabilize FtsZ filaments that have formed before they mature into polar Z rings. Prevents FtsZ polymerization. This chain is Probable septum site-determining protein MinC, found in Shouchella clausii (strain KSM-K16) (Alkalihalobacillus clausii).